The chain runs to 192 residues: Ion-translocating oxidoreductase complex subunit A (192 aa).

6 helical membrane passes run 5-25 (ILLL…FLGL), 39-59 (IGMG…AYLV), 67-87 (LGIE…VVQF), 102-122 (LLGI…VALL), 134-154 (IIYG…FASM), and 171-191 (SIAM…TGLV).

Belongs to the NqrDE/RnfAE family. The complex is composed of six subunits: RnfA, RnfB, RnfC, RnfD, RnfE and RnfG.

It is found in the cell inner membrane. Functionally, part of a membrane-bound complex that couples electron transfer with translocation of ions across the membrane. The protein is Ion-translocating oxidoreductase complex subunit A of Vibrio campbellii (strain ATCC BAA-1116).